A 129-amino-acid chain; its full sequence is Small ribosomal subunit protein uS11 (129 aa).

It belongs to the universal ribosomal protein uS11 family. As to quaternary structure, part of the 30S ribosomal subunit. Interacts with proteins S7 and S18. Binds to IF-3.

Functionally, located on the platform of the 30S subunit, it bridges several disparate RNA helices of the 16S rRNA. Forms part of the Shine-Dalgarno cleft in the 70S ribosome. The polypeptide is Small ribosomal subunit protein uS11 (Desulforamulus reducens (strain ATCC BAA-1160 / DSM 100696 / MI-1) (Desulfotomaculum reducens)).